The following is a 475-amino-acid chain: ATP synthase subunit beta (475 aa).

Position 153 to 160 (153 to 160 (GGAGVGKT)) interacts with ATP.

The protein belongs to the ATPase alpha/beta chains family. F-type ATPases have 2 components, CF(1) - the catalytic core - and CF(0) - the membrane proton channel. CF(1) has five subunits: alpha(3), beta(3), gamma(1), delta(1), epsilon(1). CF(0) has three main subunits: a(1), b(2) and c(9-12). The alpha and beta chains form an alternating ring which encloses part of the gamma chain. CF(1) is attached to CF(0) by a central stalk formed by the gamma and epsilon chains, while a peripheral stalk is formed by the delta and b chains.

The protein resides in the cell membrane. The catalysed reaction is ATP + H2O + 4 H(+)(in) = ADP + phosphate + 5 H(+)(out). Functionally, produces ATP from ADP in the presence of a proton gradient across the membrane. The catalytic sites are hosted primarily by the beta subunits. This is ATP synthase subunit beta from Limosilactobacillus reuteri (strain DSM 20016) (Lactobacillus reuteri).